Reading from the N-terminus, the 90-residue chain is Probable Fe(2+)-trafficking protein (90 aa).

This sequence belongs to the Fe(2+)-trafficking protein family.

Its function is as follows. Could be a mediator in iron transactions between iron acquisition and iron-requiring processes, such as synthesis and/or repair of Fe-S clusters in biosynthetic enzymes. The polypeptide is Probable Fe(2+)-trafficking protein (Cupriavidus taiwanensis (strain DSM 17343 / BCRC 17206 / CCUG 44338 / CIP 107171 / LMG 19424 / R1) (Ralstonia taiwanensis (strain LMG 19424))).